The sequence spans 317 residues: tRNA dimethylallyltransferase (317 aa).

19-26 (GPTASGKS) contacts ATP. A substrate-binding site is contributed by 21-26 (TASGKS). The segment at 44-47 (DSMQ) is interaction with substrate tRNA.

The protein belongs to the IPP transferase family. In terms of assembly, monomer. The cofactor is Mg(2+).

It catalyses the reaction adenosine(37) in tRNA + dimethylallyl diphosphate = N(6)-dimethylallyladenosine(37) in tRNA + diphosphate. Functionally, catalyzes the transfer of a dimethylallyl group onto the adenine at position 37 in tRNAs that read codons beginning with uridine, leading to the formation of N6-(dimethylallyl)adenosine (i(6)A). In Methylorubrum extorquens (strain PA1) (Methylobacterium extorquens), this protein is tRNA dimethylallyltransferase.